A 90-amino-acid chain; its full sequence is Small ribosomal subunit protein bS16 (90 aa).

The protein belongs to the bacterial ribosomal protein bS16 family.

This is Small ribosomal subunit protein bS16 from Streptococcus thermophilus (strain CNRZ 1066).